A 271-amino-acid chain; its full sequence is Phosphatidylglycerol--prolipoprotein diacylglyceryl transferase (271 aa).

4 helical membrane passes run 25–45 (WYGIMYVIALLLALLLAKFFV), 60–80 (YFIWVEIGVILGARLGYILIY), 103–123 (FVGIRGMSYHGAIIGFLIATL), and 131–151 (ANPWIFLDLVALSVPLAYVFG). Arg-152 contacts a 1,2-diacyl-sn-glycero-3-phospho-(1'-sn-glycerol). The next 3 helical transmembrane spans lie at 181–201 (PSQLYEAFLEGIVVFIIVYLA), 209–229 (GELILVYAGAYSLARFICEFY), and 235–255 (GIGFVLWGMSMGQILSFIMFI).

Belongs to the Lgt family.

It localises to the cell inner membrane. The catalysed reaction is L-cysteinyl-[prolipoprotein] + a 1,2-diacyl-sn-glycero-3-phospho-(1'-sn-glycerol) = an S-1,2-diacyl-sn-glyceryl-L-cysteinyl-[prolipoprotein] + sn-glycerol 1-phosphate + H(+). It functions in the pathway protein modification; lipoprotein biosynthesis (diacylglyceryl transfer). Catalyzes the transfer of the diacylglyceryl group from phosphatidylglycerol to the sulfhydryl group of the N-terminal cysteine of a prolipoprotein, the first step in the formation of mature lipoproteins. The polypeptide is Phosphatidylglycerol--prolipoprotein diacylglyceryl transferase (Campylobacter jejuni (strain RM1221)).